Here is a 506-residue protein sequence, read N- to C-terminus: Histidine--tRNA ligase, mitochondrial (506 aa).

Residues 1-33 (MHLLGLLPRRAWASLLSQLLRPPWASCTGAVRC) constitute a mitochondrion transit peptide. Ser67 bears the Phosphoserine mark. Residues 131–133 (DLT), Arg158, Gln174, Asp178, Arg327, and 331–332 (YY) each bind L-histidine. N6-acetyllysine is present on Lys444.

It belongs to the class-II aminoacyl-tRNA synthetase family. Homodimer.

It is found in the mitochondrion. The enzyme catalyses tRNA(His) + L-histidine + ATP = L-histidyl-tRNA(His) + AMP + diphosphate + H(+). Functionally, mitochondrial aminoacyl-tRNA synthetase that catalyzes the ATP-dependent ligation of histidine to the 3'-end of its cognate tRNA, via the formation of an aminoacyl-adenylate intermediate (His-AMP). This chain is Histidine--tRNA ligase, mitochondrial (HARS2), found in Pongo abelii (Sumatran orangutan).